Reading from the N-terminus, the 163-residue chain is Protein GOLVEN 3 (163 aa).

Positions 1 to 20 (MMRFTIIVIAFLLIIQSLEE) are cleaved as a signal peptide. A propeptide spanning residues 21 to 141 (EHILVYAHEG…MEKLARLLRD (121 aa)) is cleaved from the precursor. Tyrosine 143 carries the sulfotyrosine modification. The interval 144–163 (PIYSKPRRKPPVNNRAPDKF) is disordered. The residue at position 154 (proline 154) is a Hydroxyproline. The propeptide occupies 158-163 (RAPDKF).

This sequence belongs to the RGF family. In terms of assembly, binds to LRR receptor-like serine/threonine-protein kinases RGI1, RGI2 and RGI3 to trigger their dimerization with SERK proteins and subsequent signaling. In terms of tissue distribution, expressed in roots, specifically in the root apical meristem (RAM).

Its subcellular location is the secreted. In terms of biological role, signaling peptide (root growth factor) required during root gravitropism in a PIN2-traffic dependent manner, thus influencing the formation of auxin gradients. Maintains the postembryonic root stem cell niche. This Arabidopsis thaliana (Mouse-ear cress) protein is Protein GOLVEN 3.